The primary structure comprises 456 residues: Acid sphingomyelinase-like phosphodiesterase 3b (456 aa).

The first 18 residues, 1 to 18 (MTLLGWLIFLAPWGVAGA), serve as a signal peptide directing secretion. The Zn(2+) site is built by Asp28 and His30. Asn34 carries N-linked (GlcNAc...) asparagine glycosylation. An intrachain disulfide couples Cys45 to Cys64. Asn72 carries an N-linked (GlcNAc...) asparagine glycan. Asp93 is a Zn(2+) binding site. Asn100 carries N-linked (GlcNAc...) asparagine glycosylation. Residue Asn134 coordinates Zn(2+). 2 N-linked (GlcNAc...) asparagine glycosylation sites follow: Asn164 and Asn223. Residues His236, His277, and His279 each contribute to the Zn(2+) site. 2 disulfides stabilise this stretch: Cys405–Cys409 and Cys415–Cys428.

The protein belongs to the acid sphingomyelinase family. As to quaternary structure, interacts with TLR4, TLR7, TLR8 and TLR9. Requires Zn(2+) as cofactor. In terms of processing, N-glycosylated. In terms of tissue distribution, macrophages and dendritic cells.

It localises to the secreted. The protein resides in the cell membrane. In terms of biological role, lipid-modulating phosphodiesterase. Active on the surface of macrophages and dendritic cells and strongly influences macrophage lipid composition and membrane fluidity. Acts as a negative regulator of Toll-like receptor signaling. Has in vitro phosphodiesterase activity, but the physiological substrate is unknown. Lacks activity with phosphocholine-containing lipids, but can cleave CDP-choline, and can release phosphate from ATP and ADP (in vitro). This chain is Acid sphingomyelinase-like phosphodiesterase 3b (Smpdl3b), found in Mus musculus (Mouse).